Consider the following 89-residue polypeptide: Putative regulatory protein CYB_0055 (89 aa).

The protein belongs to the RemA family.

This Synechococcus sp. (strain JA-2-3B'a(2-13)) (Cyanobacteria bacterium Yellowstone B-Prime) protein is Putative regulatory protein CYB_0055.